A 1179-amino-acid chain; its full sequence is Integrin alpha-E (1179 aa).

The N-terminal stretch at 1 to 18 is a signal peptide; that stretch reads MWLFHTLLCIASLALLAA. Residues 19–1124 are Extracellular-facing; it reads FNVDVARPWL…VFLKDEKYHS (1106 aa). 2 FG-GAP repeats span residues 22–79 and 80–138; these read DVAR…EILC and HPVE…PQAQ. A glycan (N-linked (GlcNAc...) asparagine) is linked at Asn-49. 2 disulfides stabilise this stretch: Cys-70/Cys-79 and Cys-126/Cys-159. Residues 145-199 are X-domain (extra domain); that stretch reads ENLLDPDARVDTGDCYSNKEGGGEDDVNTARQRRALEKEEEEDKEEEEDEEEEEA. The segment at 158–200 is disordered; the sequence is DCYSNKEGGGEDDVNTARQRRALEKEEEEDKEEEEDEEEEEAG. The span at 182–200 shows a compositional bias: acidic residues; that stretch reads KEEEEDKEEEEDEEEEEAG. In terms of domain architecture, VWFA spans 200 to 389; the sequence is GTEIAIILDG…SKLRYNIISM (190 aa). N-linked (GlcNAc...) asparagine glycans are attached at residues Asn-271 and Asn-321. The stretch at 390 to 442 is one FG-GAP 3 repeat; the sequence is EGTVGDALHYQLAQIGFSAQILDERQVLLGAVGAFDWSGGALLYDTRSRRGRF. Asn-444 carries an N-linked (GlcNAc...) asparagine glycan. FG-GAP repeat units lie at residues 447–499, 500–560, 563–627, and 631–691; these read AAAA…GREA, SFLP…DGSF, ARIL…GLSA, and QRIR…FTPS. 12 residues coordinate Ca(2+): Asp-522, Asp-524, Asp-526, Asp-530, Asp-586, Ser-588, Asp-590, Asp-594, Asp-654, Ser-656, Asp-658, and Asp-662. Cysteines 706 and 762 form a disulfide. N-linked (GlcNAc...) asparagine glycosylation is found at Asn-726 and Asn-782. An intrachain disulfide couples Cys-823 to Cys-829. Asn-857 is a glycosylation site (N-linked (GlcNAc...) asparagine). Cys-893 and Cys-907 are joined by a disulfide. N-linked (GlcNAc...) asparagine glycosylation is found at Asn-934 and Asn-954. 2 cysteine pairs are disulfide-bonded: Cys-1008–Cys-1033 and Cys-1041–Cys-1057. N-linked (GlcNAc...) asparagine glycosylation is found at Asn-1065 and Asn-1096. Residues 1125–1147 traverse the membrane as a helical segment; that stretch reads LPIIIKGSVGGLLVLIVILVILF. At 1148 to 1179 the chain is on the cytoplasmic side; it reads KCGFFKRKYQQLNLESIRKAQLKSENLLEEEN. Positions 1150-1154 match the GFFKR motif motif; the sequence is GFFKR.

Belongs to the integrin alpha chain family. Heterodimer of an alpha and a beta subunit. The alpha subunit is composed of a heavy and a light chains linked by a disulfide bond. Alpha-E associates with beta-7. In terms of tissue distribution, expressed on a subclass of T-lymphocytes known as intra-epithelial lymphocytes which are located between mucosal epithelial cells.

Its subcellular location is the membrane. In terms of biological role, integrin alpha-E/beta-7 is a receptor for E-cadherin. It mediates adhesion of intra-epithelial T-lymphocytes to epithelial cell monolayers. The polypeptide is Integrin alpha-E (ITGAE) (Homo sapiens (Human)).